Reading from the N-terminus, the 167-residue chain is NAD(P)H-quinone oxidoreductase subunit I, chloroplastic (167 aa).

2 4Fe-4S ferredoxin-type domains span residues 55-84 (GRIH…VDWK) and 95-124 (LNYS…MTEE). [4Fe-4S] cluster contacts are provided by C64, C67, C70, C74, C104, C107, C110, and C114.

The protein belongs to the complex I 23 kDa subunit family. NDH is composed of at least 16 different subunits, 5 of which are encoded in the nucleus. Requires [4Fe-4S] cluster as cofactor.

The protein localises to the plastid. It localises to the chloroplast thylakoid membrane. The catalysed reaction is a plastoquinone + NADH + (n+1) H(+)(in) = a plastoquinol + NAD(+) + n H(+)(out). It catalyses the reaction a plastoquinone + NADPH + (n+1) H(+)(in) = a plastoquinol + NADP(+) + n H(+)(out). Functionally, NDH shuttles electrons from NAD(P)H:plastoquinone, via FMN and iron-sulfur (Fe-S) centers, to quinones in the photosynthetic chain and possibly in a chloroplast respiratory chain. The immediate electron acceptor for the enzyme in this species is believed to be plastoquinone. Couples the redox reaction to proton translocation, and thus conserves the redox energy in a proton gradient. In Lepidium virginicum (Virginia pepperweed), this protein is NAD(P)H-quinone oxidoreductase subunit I, chloroplastic.